The sequence spans 118 residues: Appetite-regulating hormone (118 aa).

The first 24 residues, 1–24 (MPSTGTICSLLLLSVLLMADLAMA), serve as a signal peptide directing secretion. Residue Ser-27 is the site of O-decanoyl serine; alternate attachment. Ser-27 carries the O-hexanoyl serine; alternate lipid modification. A lipid anchor (O-octanoyl serine; alternate) is attached at Ser-27. Residues 29–50 (LSPEHQKVQQRKESKKPAAKLK) form a disordered region. Over residues 32 to 44 (EHQKVQQRKESKK) the composition is skewed to basic and acidic residues. Positions 53–76 (ALEGWLGPEDSGEVEGTEDKLEIR) are cleaved as a propeptide — removed in mature form. Residue Leu-99 is modified to Leucine amide. The propeptide at 100–118 (GKFLQDILWEEVTEAPADK) is removed in mature form.

This sequence belongs to the motilin family. O-octanoylated by GOAT/MBOAT4. O-octanoylation is essential for ghrelin activity. Post-translationally, amidation of Leu-99 is essential for obestatin activity.

The protein localises to the secreted. Functionally, ghrelin is the ligand for growth hormone secretagogue receptor type 1 (GHSR). Induces the release of growth hormone from the pituitary. Has an appetite-stimulating effect, induces adiposity and stimulates gastric acid secretion. Involved in growth regulation. In terms of biological role, obestatin may be the ligand for GPR39. May have an appetite-reducing effect resulting in decreased food intake. May reduce gastric emptying activity and jejunal motility. This Sus scrofa (Pig) protein is Appetite-regulating hormone (GHRL).